The sequence spans 182 residues: Crossover junction endodeoxyribonuclease RuvC (182 aa).

Catalysis depends on residues aspartate 7, glutamate 69, and aspartate 141. Aspartate 7, glutamate 69, and aspartate 141 together coordinate Mg(2+).

The protein belongs to the RuvC family. Homodimer which binds Holliday junction (HJ) DNA. The HJ becomes 2-fold symmetrical on binding to RuvC with unstacked arms; it has a different conformation from HJ DNA in complex with RuvA. In the full resolvosome a probable DNA-RuvA(4)-RuvB(12)-RuvC(2) complex forms which resolves the HJ. Requires Mg(2+) as cofactor.

It localises to the cytoplasm. The enzyme catalyses Endonucleolytic cleavage at a junction such as a reciprocal single-stranded crossover between two homologous DNA duplexes (Holliday junction).. In terms of biological role, the RuvA-RuvB-RuvC complex processes Holliday junction (HJ) DNA during genetic recombination and DNA repair. Endonuclease that resolves HJ intermediates. Cleaves cruciform DNA by making single-stranded nicks across the HJ at symmetrical positions within the homologous arms, yielding a 5'-phosphate and a 3'-hydroxyl group; requires a central core of homology in the junction. The consensus cleavage sequence is 5'-(A/T)TT(C/G)-3'. Cleavage occurs on the 3'-side of the TT dinucleotide at the point of strand exchange. HJ branch migration catalyzed by RuvA-RuvB allows RuvC to scan DNA until it finds its consensus sequence, where it cleaves and resolves the cruciform DNA. The chain is Crossover junction endodeoxyribonuclease RuvC from Polaromonas sp. (strain JS666 / ATCC BAA-500).